Consider the following 308-residue polypeptide: Putative mitochondrial transporter UCP3 (308 aa).

At 1–10 (MVGLKPPEVP) the chain is on the mitochondrial intermembrane side. A helical membrane pass occupies residues 11–32 (PTTAVKLLGAGTAACFADLLTF). 3 Solcar repeats span residues 11 to 102 (PTTA…VKQL), 111 to 202 (SSIT…IKEK), and 211 to 296 (DNLP…LKRA). Over 33 to 73 (PLDTAKVRLQIQGENQAARSAQYRGVLGTILTMVRNEGPRS) the chain is Mitochondrial matrix. Residues 74-96 (PYNGLVAGLQRQMSFASIRIGLY) form a helical membrane-spanning segment. At 97–116 (DSVKQLYTPKGSDHSSITTR) the chain is on the mitochondrial intermembrane side. The helical transmembrane segment at 117-133 (ILAGCTTGAMAVTCAQP) threads the bilayer. Residues 134–179 (TDVVKVRFQASIHAGPRSNRKYSGTMDAYRTIAREEGVRGLWKGIL) lie on the Mitochondrial matrix side of the membrane. A helical transmembrane segment spans residues 180–196 (PNITRNAIVNCAEMVTY). At 197 to 213 (DVIKEKVLDYHLLTDNL) the chain is on the mitochondrial intermembrane side. Residues 214 to 233 (PCHFVSAFGAGFCATVVASP) form a helical membrane-spanning segment. Over 234–267 (VDVVKTRYMNSPPGQYQNPLDCMLKMVTQEGPTA) the chain is Mitochondrial matrix. A helical membrane pass occupies residues 268–290 (FYKGFTPSFLRLGSWNVVMFVSY). Residues 275–297 (SFLRLGSWNVVMFVSYEQLKRAL) are purine nucleotide binding. The Mitochondrial intermembrane segment spans residues 291–308 (EQLKRALMKVQMLRESPF).

Belongs to the mitochondrial carrier (TC 2.A.29) family. As to quaternary structure, interacts with HAX1; the interaction is direct and calcium-dependent.

It is found in the mitochondrion inner membrane. In terms of biological role, putative transmembrane transporter that plays a role in mitochondrial metabolism via an as yet unclear mechanism. Originally, this mitochondrial protein was thought to act as a proton transmembrane transporter from the mitochondrial intermembrane space into the matrix, causing proton leaks through the inner mitochondrial membrane, thereby uncoupling mitochondrial membrane potential generation from ATP synthesis. However, this function is controversial and uncoupling may not be the function, or at least not the main function, but rather a consequence of more conventional metabolite transporter activity. This Sus scrofa (Pig) protein is Putative mitochondrial transporter UCP3.